Consider the following 146-residue polypeptide: Copper transporter 5 (146 aa).

Residues 24-44 (WLSYILTLIACFVFSAFYQYL) traverse the membrane as a helical segment. The disordered stretch occupies residues 55–74 (SSSRRAPPPPRSSSGVSAPL). A helical membrane pass occupies residues 101–121 (LLMLAAMSFNGGVFIAIVVGL).

Belongs to the copper transporter (Ctr) (TC 1.A.56) family. SLC31A subfamily. In terms of tissue distribution, highly expressed in leaves and stems and at lower levels in roots and flowers.

Its subcellular location is the membrane. In terms of biological role, involved in the transport of copper. In Arabidopsis thaliana (Mouse-ear cress), this protein is Copper transporter 5 (COPT5).